Here is a 439-residue protein sequence, read N- to C-terminus: ATP-dependent protease ATPase subunit HslU (439 aa).

ATP is bound by residues I17, 59-64, D251, E317, and R389; that span reads GVGKTE.

This sequence belongs to the ClpX chaperone family. HslU subfamily. A double ring-shaped homohexamer of HslV is capped on each side by a ring-shaped HslU homohexamer. The assembly of the HslU/HslV complex is dependent on binding of ATP.

It is found in the cytoplasm. Functionally, ATPase subunit of a proteasome-like degradation complex; this subunit has chaperone activity. The binding of ATP and its subsequent hydrolysis by HslU are essential for unfolding of protein substrates subsequently hydrolyzed by HslV. HslU recognizes the N-terminal part of its protein substrates and unfolds these before they are guided to HslV for hydrolysis. The sequence is that of ATP-dependent protease ATPase subunit HslU from Campylobacter jejuni subsp. doylei (strain ATCC BAA-1458 / RM4099 / 269.97).